Here is a 550-residue protein sequence, read N- to C-terminus: DNA gyrase subunit A (550 aa).

The Topo IIA-type catalytic domain occupies 1-550 (FRPDRSHAKS…GMATNIPPHN (550 aa)). The active-site O-(5'-phospho-DNA)-tyrosine intermediate is Tyr-66. The region spanning 192-332 (LLGAFISEGF…VQQMLLEFGV (141 aa)) is the DOD-type homing endonuclease domain.

The protein belongs to the type II topoisomerase GyrA/ParC subunit family. In terms of assembly, heterotetramer, composed of two GyrA and two GyrB chains. In the heterotetramer, GyrA contains the active site tyrosine that forms a transient covalent intermediate with DNA, while GyrB binds cofactors and catalyzes ATP hydrolysis. Post-translationally, this protein undergoes a protein self splicing that involves a post-translational excision of the intervening region (intein) followed by peptide ligation.

It localises to the cytoplasm. It catalyses the reaction ATP-dependent breakage, passage and rejoining of double-stranded DNA.. Its function is as follows. A type II topoisomerase that negatively supercoils closed circular double-stranded (ds) DNA in an ATP-dependent manner to modulate DNA topology and maintain chromosomes in an underwound state. Negative supercoiling favors strand separation, and DNA replication, transcription, recombination and repair, all of which involve strand separation. Also able to catalyze the interconversion of other topological isomers of dsDNA rings, including catenanes and knotted rings. Type II topoisomerases break and join 2 DNA strands simultaneously in an ATP-dependent manner. This Mycobacterium gordonae protein is DNA gyrase subunit A (gyrA).